We begin with the raw amino-acid sequence, 475 residues long: Glycogen synthase (475 aa).

K15 is a binding site for ADP-alpha-D-glucose.

It belongs to the glycosyltransferase 1 family. Bacterial/plant glycogen synthase subfamily.

It carries out the reaction [(1-&gt;4)-alpha-D-glucosyl](n) + ADP-alpha-D-glucose = [(1-&gt;4)-alpha-D-glucosyl](n+1) + ADP + H(+). Its pathway is glycan biosynthesis; glycogen biosynthesis. Its function is as follows. Synthesizes alpha-1,4-glucan chains using ADP-glucose. The sequence is that of Glycogen synthase from Anaeromyxobacter sp. (strain Fw109-5).